A 102-amino-acid polypeptide reads, in one-letter code: Matrix Gla protein (102 aa).

Serine 2, serine 3, and serine 5 each carry phosphoserine. Residues 18–45 (DANSFMRQPRPPNHWDSRDRFKSPRERT) form a disordered region. The Gla domain occupies 27 to 73 (RPPNHWDSRDRFKSPRERTREKCEEYRPCERLARQVGLKRAYGKYFG). The span at 30–45 (NHWDSRDRFKSPRERT) shows a compositional bias: basic and acidic residues. 4-carboxyglutamate occurs at positions 43, 47, 50, and 51. An intrachain disulfide couples cysteine 49 to cysteine 55. The tract at residues 72 to 102 (FGNRRQRPSTSGRLRPRKYRASRYRNHHYRY) is disordered. Over residues 85-102 (LRPRKYRASRYRNHHYRY) the composition is skewed to basic residues.

The protein belongs to the osteocalcin/matrix Gla protein family. In terms of processing, requires vitamin K-dependent gamma-carboxylation for its function. Accounts for 35-40% of the total protein in the acid demineralization extract of calcified cartilage.

It is found in the secreted. Functionally, associates with the organic matrix of calcified cartilage. This is Matrix Gla protein (mgp) from Galeorhinus galeus (Tope shark).